A 263-amino-acid polypeptide reads, in one-letter code: Leukocyte-associated immunoglobulin-like receptor 1 (263 aa).

The signal sequence occupies residues 1–21 (MSLHPVILLVLVLCLGWKINT). Residues 22–144 (QEGSLPDITI…TSWLKTYSIY (123 aa)) are Extracellular-facing. The Ig-like C2-type domain maps to 27 to 115 (PDITIFPNSS…TWSERSKTLE (89 aa)). 2 N-linked (GlcNAc...) asparagine glycosylation sites follow: N34 and N90. An intrachain disulfide couples C49 to C99. Residues 145–165 (IFTVVSVIFLLCLSALLFCFL) traverse the membrane as a helical segment. Over 166–263 (RHRQKKQGLP…SSTYAAIIRH (98 aa)) the chain is Cytoplasmic. 2 consecutive short sequence motifs (ITIM motif) follow at residues 226-231 (VTYIQL) and 255-260 (STYAAI). Y228 and Y257 each carry phosphotyrosine.

Interacts with SH2 domains of tyrosine-protein phosphatases PTPN6 and PTPN11. The interaction with PTPN6 is constitutive. Interacts with the SH2 domain of CSK. Binds with high affinity to extracellular matrix collagens, the interaction is functionally important. Phosphorylation at Tyr-228 and Tyr-257 activates it. May be phosphorylated by LCK. In terms of processing, N-glycosylated. Expressed in lymphoid organs and in cell lines of hemopoietic origin.

The protein resides in the cell membrane. Functionally, functions as an inhibitory receptor that plays a constitutive negative regulatory role on cytolytic function of natural killer (NK) cells, B-cells and T-cells. Activation by Tyr phosphorylation results in recruitment and activation of the phosphatases PTPN6 and PTPN11. It also reduces the increase of intracellular calcium evoked by B-cell receptor ligation. May also play its inhibitory role independently of SH2-containing phosphatases. Modulates cytokine production in CD4+ T-cells, down-regulating IL2 and IFNG production while inducing secretion of transforming growth factor beta. Also down-regulates IgG and IgE production in B-cells as well as IL8, IL10 and TNF secretion. Inhibits proliferation and induces apoptosis in myeloid leukemia cell lines as well as prevents nuclear translocation of NF-kappa-B p65 subunit/RELA and phosphorylation of I-kappa-B alpha/CHUK in these cells. Inhibits the differentiation of peripheral blood precursors towards dendritic cells. The sequence is that of Leukocyte-associated immunoglobulin-like receptor 1 (Lair1) from Mus musculus (Mouse).